Consider the following 288-residue polypeptide: Syntaxin-1B (288 aa).

A compositionally biased stretch (basic and acidic residues) spans M1–D13. Residues M1–V20 form a disordered region. Residues M1 to K264 are Cytoplasmic-facing. Phosphoserine is present on residues S10 and S14. The stretch at M29 to G104 forms a coiled coil. Positions L191–A253 constitute a t-SNARE coiled-coil homology domain. A helical; Anchor for type IV membrane protein membrane pass occupies residues I265 to L288.

Belongs to the syntaxin family. In terms of assembly, interacts with OTOF. Interacts with SYT6 and SYT8; the interaction is Ca(2+)-dependent. Post-translationally, phosphorylated by CK2. In terms of processing, (Microbial infection) Targeted and hydrolyzed by C.botulinum neurotoxin type C (BoNT/C); cleavage by BoNT/C inhibits neurotransmitter release. Probably hydrolyzes the 252-Lys-|-Ala-253 bond.

It is found in the membrane. In terms of biological role, potentially involved in docking of synaptic vesicles at presynaptic active zones. May mediate Ca(2+)-regulation of exocytosis acrosomal reaction in sperm. The chain is Syntaxin-1B (STX1B) from Bos taurus (Bovine).